A 376-amino-acid chain; its full sequence is Glutamate 5-kinase (376 aa).

Lys-17 contributes to the ATP binding site. Substrate is bound by residues Ser-56, Asp-144, and Asn-156. ATP-binding positions include 176 to 177 (TD) and 218 to 224 (TGGMQSK). The 77-residue stretch at 283-359 (KGTLLLDAGA…QSREIASVLK (77 aa)) folds into the PUA domain.

It belongs to the glutamate 5-kinase family.

The protein localises to the cytoplasm. The enzyme catalyses L-glutamate + ATP = L-glutamyl 5-phosphate + ADP. The protein operates within amino-acid biosynthesis; L-proline biosynthesis; L-glutamate 5-semialdehyde from L-glutamate: step 1/2. Functionally, catalyzes the transfer of a phosphate group to glutamate to form L-glutamate 5-phosphate. This Desulfotalea psychrophila (strain LSv54 / DSM 12343) protein is Glutamate 5-kinase.